The following is a 406-amino-acid chain: Oligouridylate-binding protein 1 (406 aa).

RRM domains are found at residues 49 to 123 (RSVY…WAYA) and 134 to 212 (YNIF…WAAK). The tract at residues 231–250 (TSGTSDDGQEKVVNEDAPEN) is disordered. Residues 255–329 (TTVYVGNLAP…KPVKCSWGSK (75 aa)) enclose the RRM 3 domain.

It localises to the nucleus. Heterogeneous nuclear ribonucleoprotein (hnRNP)-like protein that acts as a component of the pre-mRNA processing machinery. Functions to facilitate the nuclear maturation of plant pre-mRNAs. Binds with high affinity to RNA molecules that contain AU-rich regions. May bind to the 3'-UTR and protects the mRNA against exonucleolytic degradation. Associates with nuclear poly(A)+ RNA in nucleus in vivo. Does not stimulate transcription or the 3' end cleavage/polyadenylation reaction. The polypeptide is Oligouridylate-binding protein 1 (UBP1) (Nicotiana plumbaginifolia (Leadwort-leaved tobacco)).